We begin with the raw amino-acid sequence, 47 residues long: Large ribosomal subunit protein bL27c-2 (47 aa).

The protein belongs to the bacterial ribosomal protein bL27 family.

The protein resides in the plastid. The protein localises to the chloroplast. In Cyanidium caldarium (Red alga), this protein is Large ribosomal subunit protein bL27c-2.